Consider the following 1450-residue polypeptide: Protein TIC 214 (1450 aa).

A run of 6 helical transmembrane segments spans residues 29–49 (FGLY…IVVI), 61–81 (VMAF…IYYT), 86–106 (LFIK…FYWQ), 132–152 (FFDS…PIFF), 166–186 (LNFF…FFNA), and 213–233 (IIPI…HIPF).

This sequence belongs to the TIC214 family. Part of the Tic complex.

The protein localises to the plastid. The protein resides in the chloroplast inner membrane. In terms of biological role, involved in protein precursor import into chloroplasts. May be part of an intermediate translocation complex acting as a protein-conducting channel at the inner envelope. The chain is Protein TIC 214 from Chaetosphaeridium globosum (Charophycean green alga).